The sequence spans 555 residues: Neurofilament light polypeptide (555 aa).

N-acetylserine is present on Ser2. Positions 2 to 93 are head; sequence SSFSYEPYYS…KSIRTQEKAQ (92 aa). Arg23 bears the Asymmetric dimethylarginine; alternate mark. Arg23 is subject to Omega-N-methylarginine; alternate. An Omega-N-methylarginine modification is found at Arg30. Position 43 is a phosphotyrosine (Tyr43). Residues Ser56, Ser67, and Ser103 each carry the phosphoserine modification. Residues 90–401 enclose the IF rod domain; that stretch reads EKAQLQDLND…KLLEGEETRL (312 aa). The tract at residues 94 to 125 is coil 1A; sequence LQDLNDRFASFIERVHELEQQNKVLEAELLVL. Positions 126–138 are linker 1; that stretch reads RQKHSEPSRFRAL. The coil 1B stretch occupies residues 139–234; sequence YEQEIRDLRL…KVHEEEIAEL (96 aa). The interval 235–253 is linker 12; it reads QAQIQYAQISVEMDVSSKP. Residues 254 to 272 are coil 2A; the sequence is DLSAALKDIRAQYEKLAAK. The tract at residues 273–281 is linker 2; sequence NMQNAEEWF. Residues 282–397 form a coil 2B region; that stretch reads KSRFTVLTES…AAYRKLLEGE (116 aa). The segment at 398 to 444 is tail, subdomain A; the sequence is ETRLSFTSVGSLTTGYTQSSQVFGRSAYGGLQTSSYLMSARSFPSYY. The interval 398–555 is tail; it reads ETRLSFTSVG…GEEQATKKKD (158 aa). Residues 445–555 are tail, subdomain B (acidic); the sequence is TSHVQEEQIE…GEEQATKKKD (111 aa). Positions 463–555 are disordered; sequence KAEEAKDEPP…GEEQATKKKD (93 aa). Over residues 472–540 the composition is skewed to acidic residues; it reads PSEGEAEEEE…ETKEAEEEEK (69 aa). Residue Ser473 is modified to Phosphoserine. Thr532 carries the post-translational modification Phosphothreonine. Residues 541 to 555 show a composition bias toward basic and acidic residues; sequence KDEGAGEEQATKKKD.

Belongs to the intermediate filament family. In terms of assembly, forms homodimers (in vitro). Forms heterodimers with NEFH or NEFM; which can further hetero-oligomerize (in vitro). Forms heterodimers with INA (in vitro). Interacts with ARHGEF28. Interacts with TRIM2. O-glycosylated. In terms of processing, phosphorylated in the head and rod regions by the PKC kinase PKN1, leading to the inhibition of polymerization. Post-translationally, ubiquitinated in the presence of TRIM2 and UBE2D1.

It is found in the cell projection. Its subcellular location is the axon. The protein resides in the cytoplasm. The protein localises to the cytoskeleton. Functionally, neurofilaments usually contain three intermediate filament proteins: NEFL, NEFM, and NEFH which are involved in the maintenance of neuronal caliber. May additionally cooperate with the neuronal intermediate filament proteins PRPH and INA to form neuronal filamentous networks. This Bos taurus (Bovine) protein is Neurofilament light polypeptide (NEFL).